The following is a 211-amino-acid chain: Guanylate kinase (211 aa).

Positions 5–184 constitute a Guanylate kinase-like domain; it reads GLLIVFSGPS…AAERVKRIIE (180 aa). 12 to 19 is a binding site for ATP; the sequence is GPSGVGKG.

Belongs to the guanylate kinase family.

The protein localises to the cytoplasm. The enzyme catalyses GMP + ATP = GDP + ADP. In terms of biological role, essential for recycling GMP and indirectly, cGMP. The polypeptide is Guanylate kinase (Streptococcus pyogenes serotype M1).